We begin with the raw amino-acid sequence, 307 residues long: Ethylmalonyl-CoA decarboxylase (307 aa).

Residue A2 is modified to N-acetylalanine. K217 carries the N6-acetyllysine; alternate modification. The residue at position 217 (K217) is an N6-succinyllysine; alternate. K301 carries the N6-succinyllysine modification.

It belongs to the enoyl-CoA hydratase/isomerase family.

It is found in the cytoplasm. It localises to the cytosol. It catalyses the reaction (2S)-ethylmalonyl-CoA + H(+) = butanoyl-CoA + CO2. The catalysed reaction is (S)-methylmalonyl-CoA + H(+) = propanoyl-CoA + CO2. It carries out the reaction (2R)-ethylmalonyl-CoA + H(+) = butanoyl-CoA + CO2. Decarboxylates ethylmalonyl-CoA, a potentially toxic metabolite, to form butyryl-CoA, suggesting it might be involved in metabolite proofreading. Acts preferentially on (S)-ethylmalonyl-CoA but also has some activity on the (R)-isomer. Also has methylmalonyl-CoA decarboxylase activity at lower level. In Homo sapiens (Human), this protein is Ethylmalonyl-CoA decarboxylase (ECHDC1).